Reading from the N-terminus, the 300-residue chain is NAD kinase (300 aa).

Asp-75 functions as the Proton acceptor in the catalytic mechanism. NAD(+) is bound by residues 75 to 76 (DG), 149 to 150 (ND), Arg-177, Asp-179, 190 to 195 (TAYALS), Ala-214, and Gln-248.

It belongs to the NAD kinase family. The cofactor is a divalent metal cation.

It is found in the cytoplasm. The catalysed reaction is NAD(+) + ATP = ADP + NADP(+) + H(+). Functionally, involved in the regulation of the intracellular balance of NAD and NADP, and is a key enzyme in the biosynthesis of NADP. Catalyzes specifically the phosphorylation on 2'-hydroxyl of the adenosine moiety of NAD to yield NADP. This is NAD kinase from Burkholderia vietnamiensis (strain G4 / LMG 22486) (Burkholderia cepacia (strain R1808)).